The sequence spans 174 residues: NADH-quinone oxidoreductase subunit B 1 (174 aa).

Residues cysteine 38, cysteine 39, cysteine 104, and cysteine 133 each contribute to the [4Fe-4S] cluster site.

The protein belongs to the complex I 20 kDa subunit family. In terms of assembly, NDH-1 is composed of 14 different subunits. Subunits NuoB, C, D, E, F, and G constitute the peripheral sector of the complex. [4Fe-4S] cluster is required as a cofactor.

Its subcellular location is the cell membrane. The catalysed reaction is a quinone + NADH + 5 H(+)(in) = a quinol + NAD(+) + 4 H(+)(out). NDH-1 shuttles electrons from NADH, via FMN and iron-sulfur (Fe-S) centers, to quinones in the respiratory chain. The immediate electron acceptor for the enzyme in this species is believed to be ubiquinone. Couples the redox reaction to proton translocation (for every two electrons transferred, four hydrogen ions are translocated across the cytoplasmic membrane), and thus conserves the redox energy in a proton gradient. The polypeptide is NADH-quinone oxidoreductase subunit B 1 (Chloroflexus aggregans (strain MD-66 / DSM 9485)).